The chain runs to 509 residues: UDP-N-acetylmuramoyl-L-alanyl-D-glutamate--2,6-diaminopimelate ligase (509 aa).

Residue S32 participates in UDP-N-acetyl-alpha-D-muramoyl-L-alanyl-D-glutamate binding. 117–123 provides a ligand contact to ATP; that stretch reads GTNGKTT. Residues 159 to 160, S186, Q192, and R194 contribute to the UDP-N-acetyl-alpha-D-muramoyl-L-alanyl-D-glutamate site; that span reads TT. The residue at position 226 (K226) is an N6-carboxylysine. Meso-2,6-diaminopimelate-binding positions include R401, 425-428, G476, and E480; that span reads DNPR. The Meso-diaminopimelate recognition motif signature appears at 425-428; the sequence is DNPR.

It belongs to the MurCDEF family. MurE subfamily. Mg(2+) is required as a cofactor. Carboxylation is probably crucial for Mg(2+) binding and, consequently, for the gamma-phosphate positioning of ATP.

The protein resides in the cytoplasm. The catalysed reaction is UDP-N-acetyl-alpha-D-muramoyl-L-alanyl-D-glutamate + meso-2,6-diaminopimelate + ATP = UDP-N-acetyl-alpha-D-muramoyl-L-alanyl-gamma-D-glutamyl-meso-2,6-diaminopimelate + ADP + phosphate + H(+). It participates in cell wall biogenesis; peptidoglycan biosynthesis. In terms of biological role, catalyzes the addition of meso-diaminopimelic acid to the nucleotide precursor UDP-N-acetylmuramoyl-L-alanyl-D-glutamate (UMAG) in the biosynthesis of bacterial cell-wall peptidoglycan. In Prochlorococcus marinus (strain NATL1A), this protein is UDP-N-acetylmuramoyl-L-alanyl-D-glutamate--2,6-diaminopimelate ligase.